Reading from the N-terminus, the 218-residue chain is Adenylate kinase (218 aa).

Position 10-15 (10-15 (GAGKGT)) interacts with ATP. An NMP region spans residues 30–59 (STGDMLRAAVQAQTPVGIEAKKVMDAGKLV). AMP-binding positions include T31, R36, 57–59 (KLV), 85–88 (GFPR), and Q92. The interval 122 to 159 (GRRVHLSSGRTYHVRFNPPKKEGLDDLTGEPLVQREDD) is LID. ATP-binding positions include R123 and 132–133 (TY). Positions 156 and 167 each coordinate AMP. Residue G203 participates in ATP binding.

It belongs to the adenylate kinase family. Monomer.

The protein resides in the cytoplasm. The enzyme catalyses AMP + ATP = 2 ADP. It functions in the pathway purine metabolism; AMP biosynthesis via salvage pathway; AMP from ADP: step 1/1. Catalyzes the reversible transfer of the terminal phosphate group between ATP and AMP. Plays an important role in cellular energy homeostasis and in adenine nucleotide metabolism. This chain is Adenylate kinase, found in Chlorobium phaeobacteroides (strain DSM 266 / SMG 266 / 2430).